The primary structure comprises 288 residues: Protein PXR1 (288 aa).

Positions 25–72 (QSRFGHKHLMRFGWQPGQGLGTQPVQSMKTHIKVSIKDDNLGLGAKLK) constitute a G-patch domain. Positions 147–258 (SYSQMEKDSS…TSIPESVSTR (112 aa)) are disordered. Positions 157 to 166 (SDEESDDDED) are enriched in acidic residues. Composition is skewed to basic residues over residues 169–185 (KKHK…KKRK) and 195–214 (KKKK…KDKK). Residues 238–256 (RTASIESSTSATSIPESVS) show a composition bias toward low complexity.

It belongs to the PINX1 family.

The protein localises to the nucleus. It localises to the nucleolus. In terms of biological role, involved in rRNA-processing at A0, A1 and A2 sites and negatively regulates telomerase. The chain is Protein PXR1 (PXR1) from Candida glabrata (strain ATCC 2001 / BCRC 20586 / JCM 3761 / NBRC 0622 / NRRL Y-65 / CBS 138) (Yeast).